The chain runs to 229 residues: Endo-1,4-beta-xylanase 1 (229 aa).

An N-terminal signal peptide occupies residues 1–19 (MVAFSSLICALTSIASTLA). Positions 20–51 (MPTGLEPESSVNVTERGMYDFVLGAHNDHRRR) are excised as a propeptide. A glycan (N-linked (GlcNAc...) asparagine) is linked at Asn-31. A GH11 domain is found at 42 to 228 (LGAHNDHRRR…GSGSASQSVS (187 aa)). Tyr-117 contributes to the substrate binding site. Glu-126 functions as the Nucleophile in the catalytic mechanism. Substrate-binding residues include Tyr-128, Arg-160, Pro-164, Gln-174, and Tyr-209. The active-site Proton donor is Glu-215.

This sequence belongs to the glycosyl hydrolase 11 (cellulase G) family.

Its subcellular location is the secreted. It carries out the reaction Endohydrolysis of (1-&gt;4)-beta-D-xylosidic linkages in xylans.. It functions in the pathway glycan degradation; xylan degradation. Functionally, glycoside hydrolase involved in the hydrolysis of xylan, a major plant cell wall hemicellulose made up of 1,4-beta-linked D-xylopyranose residues. Catalyzes the endohydrolysis of the main-chain 1,4-beta-glycosidic bonds connecting the xylose subunits yielding various xylooligosaccharides and xylose. The polypeptide is Endo-1,4-beta-xylanase 1 (Hypocrea jecorina (strain QM6a) (Trichoderma reesei)).